A 161-amino-acid chain; its full sequence is Phenolic acid decarboxylase PadC (161 aa).

2 residues coordinate substrate: tyrosine 11 and tyrosine 13. Tyrosine 19 functions as the Proton donor in the catalytic mechanism. Arginine 41 is a substrate binding site. Glutamate 64 functions as the Proton acceptor in the catalytic mechanism.

It belongs to the PadC family. As to quaternary structure, homodimer.

It catalyses the reaction (E)-4-coumarate + H(+) = 4-vinylphenol + CO2. The enzyme catalyses (E)-cinnamate + H(+) = styrene + CO2. The catalysed reaction is (E)-ferulate + H(+) = 2-methoxy-4-vinylphenol + CO2. Functionally, involved in the decarboxylation and detoxification of phenolic derivatives. It is able to catalyze the decarboxylation of ferulic, p-coumaric and caffeic acids. The chain is Phenolic acid decarboxylase PadC (padC) from Bacillus subtilis (strain 168).